The chain runs to 371 residues: Succinyl-diaminopimelate desuccinylase (371 aa).

His68 is a Zn(2+) binding site. Asp70 is an active-site residue. Zn(2+) is bound at residue Asp99. The active-site Proton acceptor is Glu130. Glu131, Glu159, and His344 together coordinate Zn(2+).

Belongs to the peptidase M20A family. DapE subfamily. As to quaternary structure, homodimer. Zn(2+) serves as cofactor. Requires Co(2+) as cofactor.

The catalysed reaction is N-succinyl-(2S,6S)-2,6-diaminopimelate + H2O = (2S,6S)-2,6-diaminopimelate + succinate. Its pathway is amino-acid biosynthesis; L-lysine biosynthesis via DAP pathway; LL-2,6-diaminopimelate from (S)-tetrahydrodipicolinate (succinylase route): step 3/3. In terms of biological role, catalyzes the hydrolysis of N-succinyl-L,L-diaminopimelic acid (SDAP), forming succinate and LL-2,6-diaminopimelate (DAP), an intermediate involved in the bacterial biosynthesis of lysine and meso-diaminopimelic acid, an essential component of bacterial cell walls. The chain is Succinyl-diaminopimelate desuccinylase from Acidiphilium cryptum (strain JF-5).